A 286-amino-acid chain; its full sequence is UDP-3-O-acyl-N-acetylglucosamine deacetylase (286 aa).

Zn(2+) contacts are provided by histidine 79, histidine 237, and aspartate 241. Histidine 264 functions as the Proton donor in the catalytic mechanism.

The protein belongs to the LpxC family. Requires Zn(2+) as cofactor.

The catalysed reaction is a UDP-3-O-[(3R)-3-hydroxyacyl]-N-acetyl-alpha-D-glucosamine + H2O = a UDP-3-O-[(3R)-3-hydroxyacyl]-alpha-D-glucosamine + acetate. It participates in glycolipid biosynthesis; lipid IV(A) biosynthesis; lipid IV(A) from (3R)-3-hydroxytetradecanoyl-[acyl-carrier-protein] and UDP-N-acetyl-alpha-D-glucosamine: step 2/6. In terms of biological role, catalyzes the hydrolysis of UDP-3-O-myristoyl-N-acetylglucosamine to form UDP-3-O-myristoylglucosamine and acetate, the committed step in lipid A biosynthesis. This chain is UDP-3-O-acyl-N-acetylglucosamine deacetylase, found in Chlamydia trachomatis serovar A (strain ATCC VR-571B / DSM 19440 / HAR-13).